Consider the following 359-residue polypeptide: Ornithine cyclodeaminase (359 aa).

L-ornithine-binding residues include R53 and K77. NAD(+)-binding positions include T92, R120, 147–148 (AQ), D169, T209, 232–235 (VGGD), K239, and S300. R120 contributes to the L-ornithine binding site. Position 235 (D235) interacts with L-ornithine. Catalysis depends on D235, which acts as the Proton donor/acceptor. V301 provides a ligand contact to L-ornithine.

This sequence belongs to the ornithine cyclodeaminase/mu-crystallin family. The cofactor is NAD(+).

It catalyses the reaction L-ornithine = L-proline + NH4(+). Its pathway is amino-acid biosynthesis; L-proline biosynthesis; L-proline from L-ornithine: step 1/1. Catalyzes the conversion of L-ornithine into L-proline with release of ammonia. The chain is Ornithine cyclodeaminase from Brucella melitensis biotype 1 (strain ATCC 23456 / CCUG 17765 / NCTC 10094 / 16M).